The following is a 233-amino-acid chain: MWSGLLPPGLNESDAESNSEDEATLENSGLNLQEDKEDESIRKTEIIDFSTDEPKTETESNVNAYEECPSGIPIDMWNKFQELHKKHSEQKSTTSRFRGKRRKRSRKDKLKNEKELHSEPSSNETQWKELTQYFGVNDRFDPPVKRKKVEKSGLEKRIDQAVEEWNIEKAEELSNQLATRELGVKIAKAVACHNFVKAKKEVENSQAARKKKKLAWGFEAKKRWETKSNMGYM.

Residues 1-126 (MWSGLLPPGL…HSEPSSNETQ (126 aa)) are disordered. The span at 13 to 24 (SDAESNSEDEAT) shows a compositional bias: acidic residues. Basic and acidic residues predominate over residues 39–58 (ESIRKTEIIDFSTDEPKTET). A compositionally biased stretch (basic residues) spans 97–109 (FRGKRRKRSRKDK). Residues 144–164 (VKRKKVEKSGLEKRIDQAVEE) are a coiled coil.

The chain is Protein FAM204A (FAM204A) from Homo sapiens (Human).